A 113-amino-acid chain; its full sequence is MGTTMLAEPRTLTKAELAELLFERVGLNKREAKDIVDTFFEEIRDALARGDSVKLSGFGNFQVRDKPPRPGRNPKTGETIPIAARRVVTFHASQKLKSVVEQPNSPPDPASAE.

Disordered regions lie at residues 59 to 80 (GNFQ…GETI) and 94 to 113 (QKLK…ASAE). Over residues 104–113 (NSPPDPASAE) the composition is skewed to pro residues.

The protein belongs to the bacterial histone-like protein family. In terms of assembly, heterodimer of an alpha and a beta chain.

Functionally, this protein is one of the two subunits of integration host factor, a specific DNA-binding protein that functions in genetic recombination as well as in transcriptional and translational control. This is Integration host factor subunit alpha from Bordetella pertussis (strain Tohama I / ATCC BAA-589 / NCTC 13251).